The sequence spans 98 residues: Cell division protein FtsB (98 aa).

The Cytoplasmic segment spans residues 1–3; it reads MKR. A helical membrane pass occupies residues 4–21; it reads LLIVLIALLAMLEYRLWF. Residues 22 to 98 are Periplasmic-facing; the sequence is GDKSLAESFH…GGERDKPSND (77 aa). The stretch at 31–74 forms a coiled coil; the sequence is HLQEQIKLQQQSNAQLVARNQILREEISDLRSGTEALEERARNE.

Belongs to the FtsB family. Part of a complex composed of FtsB, FtsL and FtsQ.

It is found in the cell inner membrane. Functionally, essential cell division protein. May link together the upstream cell division proteins, which are predominantly cytoplasmic, with the downstream cell division proteins, which are predominantly periplasmic. The polypeptide is Cell division protein FtsB (Shewanella halifaxensis (strain HAW-EB4)).